A 129-amino-acid polypeptide reads, in one-letter code: Small ribosomal subunit protein uS11 (129 aa).

This sequence belongs to the universal ribosomal protein uS11 family. As to quaternary structure, part of the 30S ribosomal subunit. Interacts with proteins S7 and S18. Binds to IF-3.

Its function is as follows. Located on the platform of the 30S subunit, it bridges several disparate RNA helices of the 16S rRNA. Forms part of the Shine-Dalgarno cleft in the 70S ribosome. The protein is Small ribosomal subunit protein uS11 of Salmonella typhi.